Consider the following 300-residue polypeptide: Apolipoprotein E (300 aa).

The N-terminal stretch at 1 to 18 (MKVLWAVLVVTLLAGCQA) is a signal peptide. Positions 74 to 246 (VLMEDTMKEV…RLDEVREQME (173 aa)) are 8 X 22 AA approximate tandem repeats. 8 consecutive repeat copies span residues 75–95 (LMED…QELA), 96–117 (PMAE…ARLG), 118–139 (ADME…SMLG), 140–161 (HSAE…KRLL), 162–183 (RDAE…EGAE), 184–205 (RSVS…LRTA), 206–224 (ALTS…ERLR), and 225–243 (GRLE…EVRE). Met-137 carries the methionine sulfoxide modification. Ser-141 is subject to Phosphoserine. The tract at residues 152-162 (HLRKLRKRLLR) is LDL and other lipoprotein receptors binding. Residue 156–159 (LRKR) coordinates heparin. Residues 204-274 (TAALTSQPLQ…GWFEPMMEDI (71 aa)) are lipid-binding and lipoprotein association. 220 to 227 (GERLRGRL) contributes to the heparin binding site. The segment at 262-274 (RLKGWFEPMMEDI) is specificity for association with VLDL.

The protein belongs to the apolipoprotein A1/A4/E family. As to quaternary structure, homotetramer. May interact with ABCA1; functionally associated with ABCA1 in the biogenesis of HDLs. May interact with APP/A4 amyloid-beta peptide; the interaction is extremely stable in vitro but its physiological significance is unclear. May interact with MAPT. May interact with MAP2. In the cerebrospinal fluid, interacts with secreted SORL1. Interacts with PMEL; this allows the loading of PMEL luminal fragment on ILVs to induce fibril nucleation. In terms of processing, APOE exists as multiple glycosylated and sialylated glycoforms within cells and in plasma. The extent of glycosylation and sialylation are tissue and context specific. Post-translationally, glycated in plasma VLDL. Phosphorylated by FAM20C in the extracellular medium.

It is found in the secreted. The protein localises to the extracellular space. Its subcellular location is the extracellular matrix. It localises to the extracellular vesicle. The protein resides in the endosome. It is found in the multivesicular body. APOE is an apolipoprotein, a protein associating with lipid particles, that mainly functions in lipoprotein-mediated lipid transport between organs via the plasma and interstitial fluids. APOE is a core component of plasma lipoproteins and is involved in their production, conversion and clearance. Apolipoproteins are amphipathic molecules that interact both with lipids of the lipoprotein particle core and the aqueous environment of the plasma. As such, APOE associates with chylomicrons, chylomicron remnants, very low density lipoproteins (VLDL) and intermediate density lipoproteins (IDL) but shows a preferential binding to high-density lipoproteins (HDL). It also binds a wide range of cellular receptors including the LDL receptor/LDLR, the LDL receptor-related proteins LRP1, LRP2 and LRP8 and the very low-density lipoprotein receptor/VLDLR that mediate the cellular uptake of the APOE-containing lipoprotein particles. Finally, APOE also has a heparin-binding activity and binds heparan-sulfate proteoglycans on the surface of cells, a property that supports the capture and the receptor-mediated uptake of APOE-containing lipoproteins by cells. A main function of APOE is to mediate lipoprotein clearance through the uptake of chylomicrons, VLDLs, and HDLs by hepatocytes. APOE is also involved in the biosynthesis by the liver of VLDLs as well as their uptake by peripheral tissues ensuring the delivery of triglycerides and energy storage in muscle, heart and adipose tissues. By participating in the lipoprotein-mediated distribution of lipids among tissues, APOE plays a critical role in plasma and tissues lipid homeostasis. APOE is also involved in two steps of reverse cholesterol transport, the HDLs-mediated transport of cholesterol from peripheral tissues to the liver, and thereby plays an important role in cholesterol homeostasis. First, it is functionally associated with ABCA1 in the biogenesis of HDLs in tissues. Second, it is enriched in circulating HDLs and mediates their uptake by hepatocytes. APOE also plays an important role in lipid transport in the central nervous system, regulating neuron survival and sprouting. The sequence is that of Apolipoprotein E (APOE) from Dinomys branickii (Pacarana).